The following is a 395-amino-acid chain: LIM/homeobox protein Lhx3 (395 aa).

2 LIM zinc-binding domains span residues 28 to 78 (CAGC…CKDD) and 87 to 141 (CAAC…CKAD). The homeobox DNA-binding region spans 154–213 (AKRPRTTITAKQLETLKNAYNNSPKPARHVREQLSSETGLDMRVVQVWFQNRRAKEKRLK). Disordered regions lie at residues 208-304 (KEKR…QDQY) and 363-383 (GPSS…PVSP). Polar residues predominate over residues 257 to 278 (DEPSMSEMNHSNGIYNSLNDSS).

In terms of assembly, interacts with ldb1 and with the N-terminus of rnf12. In dorsal regions at neural tube and tailbud stages and in adults predominantly in the pituitary gland and weakly in the eye and brain.

Its subcellular location is the nucleus. Its function is as follows. Transcription factor. May be involved in the specification and maintenance of differentiation of distinct neuronal and neuroendocrine tissues. Early marker for the pituitary and pineal lineages, it may be involved in specifying these lineages. The polypeptide is LIM/homeobox protein Lhx3 (lhx3) (Xenopus laevis (African clawed frog)).